A 381-amino-acid chain; its full sequence is Dual specificity protein phosphatase 6 (381 aa).

Positions 30 to 148 (GNERLLLMDC…FQAEFALHCE (119 aa)) constitute a Rhodanese domain. Positions 176–203 (SSSDIESDLDRDPNSATDSDGSPLSNSQ) are disordered. Over residues 189–203 (NSATDSDGSPLSNSQ) the composition is skewed to polar residues. One can recognise a Tyrosine-protein phosphatase domain in the interval 206–349 (FPVEILPFLY…LLDFERTLGL (144 aa)). Cys293 functions as the Phosphocysteine intermediate in the catalytic mechanism.

The protein belongs to the protein-tyrosine phosphatase family. Non-receptor class dual specificity subfamily. As to quaternary structure, interacts with MAPK1/ERK2. In terms of processing, ubiquitinated by the SCF(FBXO31) complex, leading to its proteasomal degradation.

It is found in the cytoplasm. The catalysed reaction is O-phospho-L-tyrosyl-[protein] + H2O = L-tyrosyl-[protein] + phosphate. It catalyses the reaction O-phospho-L-seryl-[protein] + H2O = L-seryl-[protein] + phosphate. It carries out the reaction O-phospho-L-threonyl-[protein] + H2O = L-threonyl-[protein] + phosphate. Its function is as follows. Dual specificity protein phosphatase, which mediates dephosphorylation and inactivation of MAP kinases. Has a specificity for the ERK family. Plays an important role in alleviating acute postoperative pain. Necessary for the normal dephosphorylation of the long-lasting phosphorylated forms of spinal MAPK1/3 and MAP kinase p38 induced by peripheral surgery, which drives the resolution of acute postoperative allodynia. Also important for dephosphorylation of MAPK1/3 in local wound tissue, which further contributes to resolution of acute pain. The chain is Dual specificity protein phosphatase 6 (Dusp6) from Mus musculus (Mouse).